The chain runs to 270 residues: Imidazole glycerol phosphate synthase subunit HisF (270 aa).

Residues Asp11 and Asp135 contribute to the active site.

It belongs to the HisA/HisF family. In terms of assembly, heterodimer of HisH and HisF.

It is found in the cytoplasm. It catalyses the reaction 5-[(5-phospho-1-deoxy-D-ribulos-1-ylimino)methylamino]-1-(5-phospho-beta-D-ribosyl)imidazole-4-carboxamide + L-glutamine = D-erythro-1-(imidazol-4-yl)glycerol 3-phosphate + 5-amino-1-(5-phospho-beta-D-ribosyl)imidazole-4-carboxamide + L-glutamate + H(+). The protein operates within amino-acid biosynthesis; L-histidine biosynthesis; L-histidine from 5-phospho-alpha-D-ribose 1-diphosphate: step 5/9. In terms of biological role, IGPS catalyzes the conversion of PRFAR and glutamine to IGP, AICAR and glutamate. The HisF subunit catalyzes the cyclization activity that produces IGP and AICAR from PRFAR using the ammonia provided by the HisH subunit. The polypeptide is Imidazole glycerol phosphate synthase subunit HisF (Haloquadratum walsbyi (strain DSM 16790 / HBSQ001)).